The sequence spans 118 residues: U16-barytoxin-Tl1c (118 aa).

The first 16 residues, 1-16, serve as a signal peptide directing secretion; the sequence is MKTIIVFLSFLVLVLA. The propeptide occupies 17–76; sequence TKFGDANEGVNREQTKEVIQNEFRGDFLNEMAAMSLLQQLEAIESALLEKEADRNSRQKR. 3 cysteine pairs are disulfide-bonded: C77-C92, C84-C97, and C91-C112.

It belongs to the neurotoxin 14 (magi-1) family. 06 (ICK-Trit) subfamily. In terms of tissue distribution, expressed by the venom gland.

Its subcellular location is the secreted. In terms of biological role, ion channel inhibitor. This is U16-barytoxin-Tl1c from Trittame loki (Brush-footed trapdoor spider).